The sequence spans 493 residues: MFKLALTLTLCLAGSLSLAQHNPHWWGNRNTIVHLFEWKWSDIAQECENFLGPRGFAGVQVSPVNENIISAGRPWWERYQPISYKLTTRSGNEEEFGDMVRRCNDVGVRIYVDVLLNHMSGDFDGVAVGTAGTEAEPGKKSFPGVPYSAQDFHPTCEITDWNDRFQVQQCELVGLKDLDQSSDWVRSKPIEFLDHLIELGVAGFRVDAAKHMASEDLEYIYSSLSNLNIDHGFPHNARPFIFQEVIDHGHETVSRDEYKDLGAVTEFRFSEEIGNAFRGNNALKWLQSWGTGWGFLPSGQALTFVDNHDNQRDAGAVLNYKSPKQYKMATAFHLAYPYGISRVMSSFAFDDHDTPPPQDAQERIISPEFDEDGACVNGWICEHRWRQIYAMVGFKNAVRDTEITGWWDNGDNQISFCRGNKGFLAINNNLYDLSQDLNTCLPQGTYCDVISGSLIDGSCTGKSVTVNEHGYGYIHIGSDDFDGVLALHVDAKV.

A signal peptide spans 1-19 (MFKLALTLTLCLAGSLSLA). A Pyrrolidone carboxylic acid modification is found at Gln20. Residues Cys47 and Cys103 are joined by a disulfide bond. Positions 117, 168, and 177 each coordinate Ca(2+). Cys156 and Cys170 form a disulfide bridge. Chloride is bound at residue Arg205. The Nucleophile role is filled by Asp207. Residue His211 participates in Ca(2+) binding. Glu244 functions as the Proton donor in the catalytic mechanism. Residues Asn307 and Arg342 each coordinate chloride. Cystine bridges form between Cys375-Cys381, Cys417-Cys440, and Cys447-Cys459.

The protein belongs to the glycosyl hydrolase 13 family. As to quaternary structure, monomer. It depends on Ca(2+) as a cofactor. Chloride serves as cofactor.

It is found in the secreted. The catalysed reaction is Endohydrolysis of (1-&gt;4)-alpha-D-glucosidic linkages in polysaccharides containing three or more (1-&gt;4)-alpha-linked D-glucose units.. The sequence is that of Alpha-amylase-related protein (Amyrel) from Drosophila yakuba (Fruit fly).